The primary structure comprises 447 residues: Hydroxymethylglutaryl-CoA synthase (447 aa).

Catalysis depends on glutamate 86, which acts as the Proton donor/acceptor. Cysteine 118 functions as the Acyl-thioester intermediate in the catalytic mechanism. Positions 118, 156, 160, 210, 250, 259, 327, and 361 each coordinate (3S)-3-hydroxy-3-methylglutaryl-CoA. The active-site Proton donor/acceptor is histidine 250. Phosphothreonine is present on threonine 398.

It belongs to the thiolase-like superfamily. HMG-CoA synthase family.

It catalyses the reaction acetoacetyl-CoA + acetyl-CoA + H2O = (3S)-3-hydroxy-3-methylglutaryl-CoA + CoA + H(+). It participates in metabolic intermediate biosynthesis; (R)-mevalonate biosynthesis; (R)-mevalonate from acetyl-CoA: step 2/3. Hydroxymethylglutaryl-CoA synthase; part of the first module of ergosterol biosynthesis pathway that includes the early steps of the pathway, conserved across all eukaryotes, and which results in the formation of mevalonate from acetyl-coenzyme A (acetyl-CoA). Hcs1 condenses acetyl-CoA with acetoacetyl-CoA to form hydroxymethylglutaryl-CoA (HMG-CoA). The first module starts with the action of the cytosolic acetyl-CoA acetyltransferase eg10 that catalyzes the formation of acetoacetyl-CoA. The hydroxymethylglutaryl-CoA synthases erg13 then condenses acetyl-CoA with acetoacetyl-CoA to form HMG-CoA. The rate-limiting step of the early module is the reduction to mevalonate by the 3-hydroxy-3-methylglutaryl-coenzyme A (HMG-CoA) reductases hcs1. In Schizosaccharomyces pombe (strain 972 / ATCC 24843) (Fission yeast), this protein is Hydroxymethylglutaryl-CoA synthase.